The following is a 303-amino-acid chain: ATP synthase gamma chain (303 aa).

It belongs to the ATPase gamma chain family. F-type ATPases have 2 components, CF(1) - the catalytic core - and CF(0) - the membrane proton channel. CF(1) has five subunits: alpha(3), beta(3), gamma(1), delta(1), epsilon(1). CF(0) has three main subunits: a, b and c.

It localises to the cell inner membrane. Produces ATP from ADP in the presence of a proton gradient across the membrane. The gamma chain is believed to be important in regulating ATPase activity and the flow of protons through the CF(0) complex. The sequence is that of ATP synthase gamma chain from Bartonella quintana (strain Toulouse) (Rochalimaea quintana).